A 33-amino-acid chain; its full sequence is QLGPQDLPYLTADLSKKQGPWLEEEEAYGWMDF.

Residues glutamine 1 and glutamine 18 each carry the pyrrolidone carboxylic acid modification. Tyrosine 28 is subject to Sulfotyrosine. At phenylalanine 33 the chain carries Phenylalanine amide.

The protein belongs to the gastrin/cholecystokinin family.

The protein localises to the secreted. Its function is as follows. Gastrin stimulates the stomach mucosa to produce and secrete hydrochloric acid and the pancreas to secrete its digestive enzymes. It also stimulates smooth muscle contraction and increases blood circulation and water secretion in the stomach and intestine. This chain is Gastrin (GAST), found in Didelphis virginiana (North American opossum).